We begin with the raw amino-acid sequence, 174 residues long: Peptide methionine sulfoxide reductase MsrA (174 aa).

Residue Cys-11 is part of the active site.

This sequence belongs to the MsrA Met sulfoxide reductase family.

The catalysed reaction is L-methionyl-[protein] + [thioredoxin]-disulfide + H2O = L-methionyl-(S)-S-oxide-[protein] + [thioredoxin]-dithiol. The enzyme catalyses [thioredoxin]-disulfide + L-methionine + H2O = L-methionine (S)-S-oxide + [thioredoxin]-dithiol. Has an important function as a repair enzyme for proteins that have been inactivated by oxidation. Catalyzes the reversible oxidation-reduction of methionine sulfoxide in proteins to methionine. This is Peptide methionine sulfoxide reductase MsrA from Haloquadratum walsbyi (strain DSM 16790 / HBSQ001).